We begin with the raw amino-acid sequence, 382 residues long: MTNESAHNTPTVKLACDLIAQPSVTPEDAHCQRMMIERLEAIGFKVENLRFGDVDNFWAIRGESGPILAFAGHTDVVPTGDLGKWATDPFTPTIKDGMLYGRGAADMKGSLAAMITACESFIAAHPNHTGRIAFLITSDEEGPAINGTVKVVEWLEARNEKIKWCLVGEPSSTTLVGDVIKNGRRGSLGAELIVKGVQGHVAYPHLAVNPIHMIAPALAEMASETWDNGNEFFPPTSFQVSNFNSGTGATNVVPGEANVVFNFRFSTELTADILKQRTHAILDKHNVNYDLKWNLSGEPFLTAEGELVAASVAAIKKITGRDTELSTAGGTSDGRFIAPTGAQVLELGPVNATIHQINECVSVDDLNTLSDIYCTMLTELLA.

Position 73 (histidine 73) interacts with Zn(2+). The active site involves aspartate 75. Aspartate 106 serves as a coordination point for Zn(2+). Catalysis depends on glutamate 140, which acts as the Proton acceptor. The Zn(2+) site is built by glutamate 141, glutamate 169, and histidine 355.

This sequence belongs to the peptidase M20A family. DapE subfamily. In terms of assembly, homodimer. Zn(2+) serves as cofactor. It depends on Co(2+) as a cofactor.

The enzyme catalyses N-succinyl-(2S,6S)-2,6-diaminopimelate + H2O = (2S,6S)-2,6-diaminopimelate + succinate. It participates in amino-acid biosynthesis; L-lysine biosynthesis via DAP pathway; LL-2,6-diaminopimelate from (S)-tetrahydrodipicolinate (succinylase route): step 3/3. In terms of biological role, catalyzes the hydrolysis of N-succinyl-L,L-diaminopimelic acid (SDAP), forming succinate and LL-2,6-diaminopimelate (DAP), an intermediate involved in the bacterial biosynthesis of lysine and meso-diaminopimelic acid, an essential component of bacterial cell walls. This Saccharophagus degradans (strain 2-40 / ATCC 43961 / DSM 17024) protein is Succinyl-diaminopimelate desuccinylase.